The primary structure comprises 842 residues: Axin-1 (842 aa).

Residues 1-75 are disordered; sequence MSVKGKGFPL…LDLGYEPEGS (75 aa). Polar residues predominate over residues 34-46; sequence TTDQRPFSHTYYS. Residues 88 to 211 form the RGS domain; it reads SLHSLLDDQD…LKSDIYLEYT (124 aa). Disordered regions lie at residues 218 to 242, 277 to 297, 316 to 344, 414 to 451, 482 to 532, 543 to 562, 615 to 637, 656 to 675, and 729 to 754; these read PKNYSDQSSGSGTGKGPSGYLPTLN, SHCAGSNRRLSDGREFRPGTW, TSANDSEQQSMSSDADTMSLTDSSVDGIP, KRVRAEEEGDDGDVSSGPSVISHKLPSGPPMHHFNSRY, KTPG…AKVD, YHHVHHHGGVKPKEQIDGES, KKADLGKSESASHEMPVVPEDSE, HKKSNHSSSSAKKQPPTELA, and RLEEEEKKAAKMPQKQRLKPQKKNVS. Polar residues predominate over residues 316–339; sequence TSANDSEQQSMSSDADTMSLTDSS. An interaction with GSK3B region spans residues 348–433; the sequence is LRKHYRREMQ…DGDVSSGPSV (86 aa). Residues 434–508 are interaction with beta-catenin; sequence ISHKLPSGPP…RSPDGHLSKT (75 aa). A compositionally biased stretch (basic residues) spans 543-552; sequence YHHVHHHGGV. The segment covering 615 to 626 has biased composition (basic and acidic residues); it reads KKADLGKSESAS. Residues 760 to 842 form the DIX domain; that stretch reads CDNIVVAYYF…KIIGQVEKID (83 aa).

As to quaternary structure, homodimer. Interacts with hwa; leading to promote the tankyrase-mediated degradation of axin1. ADP-ribosylated by tankyrase tnks and tnks2. Poly-ADP-ribosylated protein is recognized by rnf146, followed by ubiquitination at 'Lys-48' and subsequent activation of the Wnt signaling pathway. Post-translationally, ubiquitinated by rnf146 when poly-ADP-ribosylated, leading to its degradation and subsequent activation of the Wnt signaling pathway.

It is found in the cytoplasm. Its subcellular location is the nucleus. The protein localises to the membrane. The protein resides in the cell membrane. Component of the beta-catenin destruction complex required for regulating ctnnb1 levels through phosphorylation and ubiquitination, and modulating Wnt-signaling. Controls dorsoventral patterning via two opposing effects; down-regulates ctnnb1 to inhibit the Wnt signaling pathway and ventralize embryos, but also dorsalizes embryos by activating a Wnt-independent JNK signaling pathway. The chain is Axin-1 (axin1) from Xenopus laevis (African clawed frog).